The primary structure comprises 179 residues: MAKLHDKYKETVSPELVTKFGFTSVMQVPRIEKITLNMGVGEAVADKKVMEHALRDMTAIAGQKPVVTVARKSVAGFKIREGYPIGCKVTLRGERMWEFLERLVDIAIPRIRDFRGLSVKSFDGRGNYAMGVREQIIFPEIQYDKIDKIRGMDIVITTSAKNDEEGRALLEGFNFPFKK.

This sequence belongs to the universal ribosomal protein uL5 family. In terms of assembly, part of the 50S ribosomal subunit; part of the 5S rRNA/L5/L18/L25 subcomplex. Contacts the 5S rRNA and the P site tRNA. Forms a bridge to the 30S subunit in the 70S ribosome.

Functionally, this is one of the proteins that bind and probably mediate the attachment of the 5S RNA into the large ribosomal subunit, where it forms part of the central protuberance. In the 70S ribosome it contacts protein S13 of the 30S subunit (bridge B1b), connecting the 2 subunits; this bridge is implicated in subunit movement. Contacts the P site tRNA; the 5S rRNA and some of its associated proteins might help stabilize positioning of ribosome-bound tRNAs. This Shewanella pealeana (strain ATCC 700345 / ANG-SQ1) protein is Large ribosomal subunit protein uL5.